The sequence spans 286 residues: MLRVAVPNKGSLSEAASAMLSEAGYRQRRDTRELVMVDPDNDIEFFFLRPRDIAVYVGRGTLDVGITGRDLLLDAEVEAEELLPLGFAASTFRFAGPVGDFTKVEELEGKRLATSYDGLLRGYLAERGINAKVVRLDGAVESSVRLGVADAIADVVETGNTLKAAGMEIFGEPILKSEAVLIRRTGQEGAANGTAKEIEVLIRRLQGVLVARQYVLMDYDIRKELVEQAAALTPGLESPTVSPLRDSDWVAVRSMVPKKETNRIMDELYDLGARAILVSSIHACRI.

Belongs to the ATP phosphoribosyltransferase family. Long subfamily. Mg(2+) is required as a cofactor.

It localises to the cytoplasm. The enzyme catalyses 1-(5-phospho-beta-D-ribosyl)-ATP + diphosphate = 5-phospho-alpha-D-ribose 1-diphosphate + ATP. It functions in the pathway amino-acid biosynthesis; L-histidine biosynthesis; L-histidine from 5-phospho-alpha-D-ribose 1-diphosphate: step 1/9. Feedback inhibited by histidine. In terms of biological role, catalyzes the condensation of ATP and 5-phosphoribose 1-diphosphate to form N'-(5'-phosphoribosyl)-ATP (PR-ATP). Has a crucial role in the pathway because the rate of histidine biosynthesis seems to be controlled primarily by regulation of HisG enzymatic activity. The protein is ATP phosphoribosyltransferase of Arthrobacter sp. (strain FB24).